A 145-amino-acid polypeptide reads, in one-letter code: MAFDKLGRFFGISNDDDELEKEEYTTSNKDENENLPLNSVSRDNIVSIKSGLNSAKSKIVLYEPRVYSDAKDVAQNLLNNKAVVINFSRMEDSSARRIVDFITGTVYALNGEIQRIGDKIFLATPPKFVTDGKISDLVDKKDNLS.

Belongs to the SepF family. Homodimer. Interacts with FtsZ.

The protein localises to the cytoplasm. Functionally, cell division protein that is part of the divisome complex and is recruited early to the Z-ring. Probably stimulates Z-ring formation, perhaps through the cross-linking of FtsZ protofilaments. Its function overlaps with FtsA. This is Cell division protein SepF from Lactobacillus helveticus (strain DPC 4571).